Reading from the N-terminus, the 156-residue chain is Ribosome maturation factor RimP (156 aa).

Belongs to the RimP family.

It localises to the cytoplasm. In terms of biological role, required for maturation of 30S ribosomal subunits. This Microcystis aeruginosa (strain NIES-843 / IAM M-2473) protein is Ribosome maturation factor RimP.